Reading from the N-terminus, the 383-residue chain is Acetylornithine deacetylase (383 aa).

His80 is a Zn(2+) binding site. Asp82 is an active-site residue. Asp112 contacts Zn(2+). Glu144 is a catalytic residue. Positions 145, 169, and 355 each coordinate Zn(2+).

The protein belongs to the peptidase M20A family. ArgE subfamily. As to quaternary structure, homodimer. It depends on Zn(2+) as a cofactor. Requires Co(2+) as cofactor. The cofactor is glutathione.

It localises to the cytoplasm. The enzyme catalyses N(2)-acetyl-L-ornithine + H2O = L-ornithine + acetate. Its pathway is amino-acid biosynthesis; L-arginine biosynthesis; L-ornithine from N(2)-acetyl-L-ornithine (linear): step 1/1. Functionally, catalyzes the hydrolysis of the amide bond of N(2)-acetylated L-amino acids. Cleaves the acetyl group from N-acetyl-L-ornithine to form L-ornithine, an intermediate in L-arginine biosynthesis pathway, and a branchpoint in the synthesis of polyamines. This is Acetylornithine deacetylase from Edwardsiella ictaluri (strain 93-146).